Reading from the N-terminus, the 687-residue chain is MPFGLSAGSTRSEDGSEAFLEGMVDWELSRLQRQCKVMEDERRAYSKEVHQRINKQLEEIQRLEGVRHKLRVQISIAQSQVRRLRDSERLESMGHLLKCQVRVQAEVKELQAQNQALDREIQEWESRNSAHSKNARSPGCVQHDKVKSQRRIKSLENQLDKVICRFDIQLAQNATLREELDLLRIERNRYLNVDRKLQKEIQLLKDSVRNLMVSSTSAYTVREEAKAKLGMLRERAEKEVAQNETEVQILQRQIAHLEQLHHFLKLKNGDRQPDSAIVEKREQRAREVAEGLRKTSQEKLVLRYEDALNKLSQMTGESDPDLLVEKYLELEERNFAEFNFINEQNSELEHLQEEIKEMQEALVSGRRSEEDRRAQQEQQRAELQQRVDDVHSEADDLEARYHNFREQLEKLKTNIQHLFTRAQCDSTLINDLLGIKTHMRDRDISLFLSLIEKRLVQLLTVQAFLETQVVVMFNAALMVLGQSSEDFPKKVAPPQPPDNLEDPPGFEAKDDYPLSKEELLSSVMKAEQHLKELVESIKVESTPSMTSSTQKVSSSSRLVTQRPSQVPGSIMSHRTSGILVSSGGRATSSNVGHVTFGDSSATTGGLMSSRGSIPGRVTFRSPNSSSYLGSTGYVGSSRDHDSFEASKGPGSESSGGLGSSPGPASSPGPASSTGQASSTSKDSQSNY.

3 coiled-coil regions span residues 100–193, 222–267, and 341–421; these read QVRV…YLNV, REEA…LKLK, and INEQ…LFTR. Residues 126-147 form a disordered region; sequence SRNSAHSKNARSPGCVQHDKVK. Disordered regions lie at residues 363-388, 487-511, and 540-687; these read VSGRRSEEDRRAQQEQQRAELQQRVD, FPKKVAPPQPPDNLEDPPGFEAKDD, and ESTP…QSNY. Basic and acidic residues predominate over residues 366 to 388; the sequence is RRSEEDRRAQQEQQRAELQQRVD. Low complexity predominate over residues 544 to 556; it reads SMTSSTQKVSSSS. Polar residues-rich tracts occupy residues 557–611 and 620–629; these read RLVT…SSRG and RSPNSSSYLG. Low complexity predominate over residues 660–680; the sequence is SPGPASSPGPASSTGQASSTS.

It belongs to the ODA1/DCC2 family. Component of the outer dynein arm-docking complex along with ODAD2, ODAD3, ODAD4 and CLXN. Interacts with ODAD3. Interacts with ODAD4; this interaction may facilitate the recruitment and/or attachment of outer dynein arm docking complex proteins, including ODAD1, ODAD3, and ODAD4 to ciliary axonemes. Interacts with DNAH9. Interacts with MNS1. Interacts with PIERCE1 and PIERCE2; the interactions link the outer dynein arms docking complex (ODA-DC) to the internal microtubule inner proteins (MIP) in cilium axoneme. Expressed in trachea multiciliated cells.

It localises to the cytoplasm. It is found in the cytoskeleton. The protein resides in the cilium axoneme. Its function is as follows. Component of the outer dynein arm-docking complex (ODA-DC) that mediates outer dynein arms (ODA) binding onto the doublet microtubule. Involved in mediating assembly of both ODAs and their axonemal docking complex onto ciliary microtubules. The chain is Outer dynein arm-docking complex subunit 1 (ODAD1) from Bos taurus (Bovine).